The primary structure comprises 232 residues: Orotidine 5'-phosphate decarboxylase (232 aa).

Substrate contacts are provided by residues Asp-11, Lys-33, Asp-60–Thr-69, Thr-120, Arg-181, Gln-190, Gly-210, and Arg-211. Lys-62 functions as the Proton donor in the catalytic mechanism.

This sequence belongs to the OMP decarboxylase family. Type 1 subfamily. As to quaternary structure, homodimer.

The enzyme catalyses orotidine 5'-phosphate + H(+) = UMP + CO2. Its pathway is pyrimidine metabolism; UMP biosynthesis via de novo pathway; UMP from orotate: step 2/2. Its function is as follows. Catalyzes the decarboxylation of orotidine 5'-monophosphate (OMP) to uridine 5'-monophosphate (UMP). The sequence is that of Orotidine 5'-phosphate decarboxylase from Vibrio vulnificus (strain CMCP6).